The primary structure comprises 200 residues: Pyridoxal 5'-phosphate synthase subunit PdxT (200 aa).

52–54 (GES) provides a ligand contact to L-glutamine. Cys84 acts as the Nucleophile in catalysis. Residues Arg116 and 145-146 (IR) each bind L-glutamine. Catalysis depends on charge relay system residues His181 and Glu183.

This sequence belongs to the glutaminase PdxT/SNO family. In the presence of PdxS, forms a dodecamer of heterodimers. Only shows activity in the heterodimer.

It carries out the reaction aldehydo-D-ribose 5-phosphate + D-glyceraldehyde 3-phosphate + L-glutamine = pyridoxal 5'-phosphate + L-glutamate + phosphate + 3 H2O + H(+). The catalysed reaction is L-glutamine + H2O = L-glutamate + NH4(+). The protein operates within cofactor biosynthesis; pyridoxal 5'-phosphate biosynthesis. Functionally, catalyzes the hydrolysis of glutamine to glutamate and ammonia as part of the biosynthesis of pyridoxal 5'-phosphate. The resulting ammonia molecule is channeled to the active site of PdxS. In Saccharolobus islandicus (strain M.16.27) (Sulfolobus islandicus), this protein is Pyridoxal 5'-phosphate synthase subunit PdxT.